We begin with the raw amino-acid sequence, 400 residues long: MCSIGEDDFGDEGATHAMLPGSSTVGTVITAGSCNKCGLNSLELYKLNFRAAECHQCFLSYARHKFRAALGAAKALPRNAEVLLLVDGSAESLVLLDMLHFAQTQNTFKRLHCSARVLHIDAQSSPSENDPLPMLNELRERYAPFEFYVIQLGAEVHSLKLLKDYSASRLDSTDNKLRSLTARQDYVRQQRKRLIGAVALQLQCTHVFEPSISSSLAAQLLTSVALGRGGSVALDVALLDDRLQGAVTLLRPLKDLNEQEVQFYIKAQQLKPFRSDESSLLSDASLQNLTSAFVANLQLNYASTVSTVFRTGDKIAAKRQPIEEGPSTCALCQSDLDSGLSDTLLAIEYSRAVSEMGVALQQQNNMEALEQRARERLNSMDNLCHACRNIHAELTHGSLI.

Belongs to the CTU2/NCS2 family.

The protein resides in the cytoplasm. Its pathway is tRNA modification; 5-methoxycarbonylmethyl-2-thiouridine-tRNA biosynthesis. Plays a central role in 2-thiolation of mcm(5)S(2)U at tRNA wobble positions of tRNA(Lys), tRNA(Glu) and tRNA(Gln). May act by forming a heterodimer with NCS6/CTU1 that ligates sulfur from thiocarboxylated URM1 onto the uridine of tRNAs at wobble position. The protein is Cytoplasmic tRNA 2-thiolation protein 2 of Drosophila virilis (Fruit fly).